The primary structure comprises 93 residues: Small ribosomal subunit protein uS19 (93 aa).

Disordered regions lie at residues 1-24 (MPRSLKKGPFVDDHLQKKVDAQNE) and 73-93 (EFAPTRTFKGHEKDDRKGRRR). 2 stretches are compositionally biased toward basic and acidic residues: residues 9–21 (PFVDDHLQKKVDA) and 81–93 (KGHEKDDRKGRRR).

Belongs to the universal ribosomal protein uS19 family.

Functionally, protein S19 forms a complex with S13 that binds strongly to the 16S ribosomal RNA. The sequence is that of Small ribosomal subunit protein uS19 from Kineococcus radiotolerans (strain ATCC BAA-149 / DSM 14245 / SRS30216).